A 659-amino-acid polypeptide reads, in one-letter code: A-type ATP synthase subunit I (659 aa).

Transmembrane regions (helical) follow at residues 376-396 (FFFG…IISA), 415-435 (IMLW…SYCG), 460-480 (MIAL…GFIV), 489-509 (GAIF…LFAL), 518-538 (LIVK…EVLA), 542-562 (MAVL…LSYA), 568-588 (ALAT…IWGI), and 590-610 (IASV…GHIF).

Belongs to the V-ATPase 116 kDa subunit family. Has multiple subunits with at least A(3), B(3), C, D, E, F, H, I and proteolipid K(x).

It localises to the cell membrane. In terms of biological role, component of the A-type ATP synthase that produces ATP from ADP in the presence of a proton gradient across the membrane. In Pyrococcus horikoshii (strain ATCC 700860 / DSM 12428 / JCM 9974 / NBRC 100139 / OT-3), this protein is A-type ATP synthase subunit I.